The following is a 71-amino-acid chain: uncharacterized protein (71 aa).

A helical transmembrane segment spans residues 2–24; sequence IIAIVAVVIFLLNFLTPYGYMPM. Positions 48 to 71 are disordered; the sequence is PAESSSNGGSMITKPSTGACQGGR. Residues 49-71 are compositionally biased toward polar residues; that stretch reads AESSSNGGSMITKPSTGACQGGR.

It is found in the membrane. This is an uncharacterized protein from Archaeoglobus fulgidus (strain ATCC 49558 / DSM 4304 / JCM 9628 / NBRC 100126 / VC-16).